A 412-amino-acid polypeptide reads, in one-letter code: Subtilisin-like protease 6 (412 aa).

The signal sequence occupies residues 1-20 (MGFITKAIPIVLAALSTVNG). A propeptide spanning residues 21–127 (ARILEAGPHA…VRATTNGTNL (107 aa)) is cleaved from the precursor. An Inhibitor I9 domain is found at 36–120 (KYIVVMKKDV…FIEPDFVVRA (85 aa)). Positions 135 to 412 (SWGLARVSTR…SKLIYNGSGK (278 aa)) constitute a Peptidase S8 domain. Residues Asp-167 and His-198 each act as charge relay system in the active site. 3 N-linked (GlcNAc...) asparagine glycosylation sites follow: Asn-252, Asn-264, and Asn-325. The active-site Charge relay system is Ser-358. Residue Asn-408 is glycosylated (N-linked (GlcNAc...) asparagine).

Belongs to the peptidase S8 family.

The protein localises to the secreted. Functionally, secreted subtilisin-like serine protease with keratinolytic activity that contributes to pathogenicity. The sequence is that of Subtilisin-like protease 6 (SUB6) from Trichophyton verrucosum (strain HKI 0517).